A 283-amino-acid polypeptide reads, in one-letter code: D-alanine aminotransferase (283 aa).

Tyr-31 contacts substrate. Residue Arg-50 participates in pyridoxal 5'-phosphate binding. Positions 98 and 100 each coordinate substrate. Lys-144 functions as the Proton acceptor in the catalytic mechanism. Lys-144 bears the N6-(pyridoxal phosphate)lysine mark. Position 176 (Glu-176) interacts with pyridoxal 5'-phosphate.

The protein belongs to the class-IV pyridoxal-phosphate-dependent aminotransferase family. Homodimer. Pyridoxal 5'-phosphate serves as cofactor.

The enzyme catalyses D-alanine + 2-oxoglutarate = D-glutamate + pyruvate. Functionally, acts on the D-isomers of alanine, leucine, aspartate, glutamate, aminobutyrate, norvaline and asparagine. The enzyme transfers an amino group from a substrate D-amino acid to the pyridoxal phosphate cofactor to form pyridoxamine and an alpha-keto acid in the first half-reaction. The second half-reaction is the reverse of the first, transferring the amino group from the pyridoxamine to a second alpha-keto acid to form the product D-amino acid via a ping-pong mechanism. This is an important process in the formation of D-alanine and D-glutamate, which are essential bacterial cell wall components. The sequence is that of D-alanine aminotransferase (dat) from Bacillus licheniformis.